A 293-amino-acid chain; its full sequence is Extracellular metalloprotease PODANS_2_14170 (293 aa).

Positions 1-18 (MRFSLALAAAGLAQTAFA) are cleaved as a signal peptide. Asn60 carries N-linked (GlcNAc...) asparagine glycosylation. His206 serves as a coordination point for Zn(2+). The active site involves Glu207. Residue His210 participates in Zn(2+) binding. Cysteines 242 and 269 form a disulfide.

The protein belongs to the peptidase M43B family.

Its subcellular location is the secreted. In terms of biological role, secreted metalloproteinase that allows assimilation of proteinaceous substrates. This Podospora anserina (strain S / ATCC MYA-4624 / DSM 980 / FGSC 10383) (Pleurage anserina) protein is Extracellular metalloprotease PODANS_2_14170.